The following is a 506-amino-acid chain: Glycine--tRNA ligase (506 aa).

Residues Arg-99 and Glu-189 each contribute to the substrate site. Residues 221–223 (RNE), 231–236 (FRVREL), 306–307 (EI), and 365–368 (GVDR) each bind ATP. A substrate-binding site is contributed by 236 to 240 (LEQME). 361–365 (EPSAG) serves as a coordination point for substrate.

It belongs to the class-II aminoacyl-tRNA synthetase family. In terms of assembly, homodimer.

The protein resides in the cytoplasm. The enzyme catalyses tRNA(Gly) + glycine + ATP = glycyl-tRNA(Gly) + AMP + diphosphate. In terms of biological role, catalyzes the attachment of glycine to tRNA(Gly). The protein is Glycine--tRNA ligase of Deinococcus radiodurans (strain ATCC 13939 / DSM 20539 / JCM 16871 / CCUG 27074 / LMG 4051 / NBRC 15346 / NCIMB 9279 / VKM B-1422 / R1).